Here is an 858-residue protein sequence, read N- to C-terminus: DNA mismatch repair protein MutS (858 aa).

Gly-609–Ser-616 lines the ATP pocket.

Belongs to the DNA mismatch repair MutS family.

Its function is as follows. This protein is involved in the repair of mismatches in DNA. It is possible that it carries out the mismatch recognition step. This protein has a weak ATPase activity. The chain is DNA mismatch repair protein MutS from Enterococcus faecalis (strain ATCC 700802 / V583).